The primary structure comprises 788 residues: Phenylalanine--tRNA ligase beta subunit (788 aa).

A tRNA-binding domain is found at 39–147; the sequence is FNVSGEIITA…DPVELGVNVV (109 aa). One can recognise a B5 domain in the interval 399–472; the sequence is IEPKKVMLRK…RIYGYEKVES (74 aa). The Mg(2+) site is built by D450, D456, E459, and E460. In terms of domain architecture, FDX-ACB spans 694 to 787; it reads PRFPAVRRDI…AEREFGIRRR (94 aa).

The protein belongs to the phenylalanyl-tRNA synthetase beta subunit family. Type 1 subfamily. Tetramer of two alpha and two beta subunits. It depends on Mg(2+) as a cofactor.

It is found in the cytoplasm. The enzyme catalyses tRNA(Phe) + L-phenylalanine + ATP = L-phenylalanyl-tRNA(Phe) + AMP + diphosphate + H(+). The polypeptide is Phenylalanine--tRNA ligase beta subunit (pheT) (Thermotoga maritima (strain ATCC 43589 / DSM 3109 / JCM 10099 / NBRC 100826 / MSB8)).